The primary structure comprises 102 residues: Small ribosomal subunit protein uS10 (102 aa).

It belongs to the universal ribosomal protein uS10 family. Part of the 30S ribosomal subunit.

In terms of biological role, involved in the binding of tRNA to the ribosomes. The protein is Small ribosomal subunit protein uS10 of Finegoldia magna (strain ATCC 29328 / DSM 20472 / WAL 2508) (Peptostreptococcus magnus).